A 156-amino-acid chain; its full sequence is Transcriptional repressor NrdR (156 aa).

Residues Cys3 to Cys34 fold into a zinc finger. In terms of domain architecture, ATP-cone spans Leu49 to Gln139.

Belongs to the NrdR family. The cofactor is Zn(2+).

Negatively regulates transcription of bacterial ribonucleotide reductase nrd genes and operons by binding to NrdR-boxes. This chain is Transcriptional repressor NrdR, found in Staphylococcus aureus (strain NCTC 8325 / PS 47).